The primary structure comprises 379 residues: Cobalt-precorrin-5B C(1)-methyltransferase (379 aa).

This sequence belongs to the CbiD family.

The enzyme catalyses Co-precorrin-5B + S-adenosyl-L-methionine = Co-precorrin-6A + S-adenosyl-L-homocysteine. The protein operates within cofactor biosynthesis; adenosylcobalamin biosynthesis; cob(II)yrinate a,c-diamide from sirohydrochlorin (anaerobic route): step 6/10. Catalyzes the methylation of C-1 in cobalt-precorrin-5B to form cobalt-precorrin-6A. In Klebsiella pneumoniae subsp. pneumoniae (strain ATCC 700721 / MGH 78578), this protein is Cobalt-precorrin-5B C(1)-methyltransferase.